The primary structure comprises 1403 residues: Baculoviral IAP repeat-containing protein 1f (1403 aa).

BIR repeat units follow at residues 60–127 (EAKR…CEFL), 159–227 (EEAR…CEFL), and 278–345 (EELR…CVFL). Zn(2+) contacts are provided by C315, C318, H335, and C342. Residues 464–759 (SVMCVEGEAG…EFLAAVRLTE (296 aa)) form the NACHT domain. 473–478 (GSGKTT) is an ATP binding site.

In terms of assembly, component of the NLRC4 inflammasome, at least composed of NLRC4, caspase-1 (CASP1) and some NAIP protein. (Microbial infection) Interacts with S.typhimurium (Salmonella) flagellin.

In terms of biological role, sensor component of the NLRC4 inflammasome that specifically recognizes and binds flagellin from pathogenic bacteria. Association of pathogenic bacteria proteins drives in turn drive assembly and activation of the NLRC4 inflammasome, promoting caspase-1 activation, cytokine production and macrophage pyroptosis. The NLRC4 inflammasome is activated as part of the innate immune response to a range of intracellular bacteria. The NLRC4 inflammasome senses Gram-negative bacteria such as L.pneumophila and P.aeruginosa, enteric pathogens S.typhimurium (Salmonella) and S.flexneri. May contribute to prevent motor-neuron apoptosis induced by a variety of signals. The chain is Baculoviral IAP repeat-containing protein 1f (Naip6) from Mus musculus (Mouse).